A 216-amino-acid chain; its full sequence is MSITAAQVNELRKITGAGLMDCKKALTETNGDLEQAVDYLRKKGLAAASKKAGRAATEGAVGSYIHAGGKIGVLVEVNCETDFVARNDNFQAFVKDIAMHIAAASPQYVRREEVPAELLEREKEIYRAKARETGKPENIIEKIIEGQINKFYAEICLMEQNFVKDPDKTVQQFLNETISSIGENMSVRRFARFVLGEGLEKKESDFAAEVAAAAGL.

Positions 81 to 84 (TDFV) are involved in Mg(2+) ion dislocation from EF-Tu.

The protein belongs to the EF-Ts family.

It is found in the cytoplasm. Associates with the EF-Tu.GDP complex and induces the exchange of GDP to GTP. It remains bound to the aminoacyl-tRNA.EF-Tu.GTP complex up to the GTP hydrolysis stage on the ribosome. The polypeptide is Elongation factor Ts (Geobacter sulfurreducens (strain ATCC 51573 / DSM 12127 / PCA)).